Consider the following 364-residue polypeptide: Palmitoyltransferase ZDHHC9 (364 aa).

Over 1–35 (MSVMVVRKKVTRKWEKLPGRNTFCCDGRVMMARQK) the chain is Cytoplasmic. Residues 36-56 (GIFYLTLFLILGTCTLFFAFE) form a helical membrane-spanning segment. At 57 to 63 (CRYLAVQ) the chain is on the lumenal side. The helical transmembrane segment at 64–84 (QSPAIPVFAAMLFLFSMATLL) threads the bilayer. Over 85–183 (RASFSDPGVI…NCVGKRNYRY (99 aa)) the chain is Cytoplasmic. A DHHC domain is found at 139–189 (KYCYTCKIFRPPRASHCSICDNCVERFDHHCPWVGNCVGKRNYRYFYLFIL). The active-site S-palmitoyl cysteine intermediate is the cysteine 169. Residues 184–204 (FYLFILSLSLLTIYVFAFNIV) traverse the membrane as a helical segment. Over 205–228 (YVALKSLKIGFLETLKETPGTVLE) the chain is Lumenal. A helical membrane pass occupies residues 229–249 (VLICFFTLWSVVGLTGFHTFL). The Cytoplasmic segment spans residues 250–364 (VALNQTTNED…PPQEAAEAEK (115 aa)). The interval 303-364 (PLEESGSRPP…PPQEAAEAEK (62 aa)) is disordered. Over residues 310 to 323 (RPPSTQETSSSLLP) the composition is skewed to polar residues. A compositionally biased stretch (pro residues) spans 346–356 (EMPPPEPPEPP).

The protein belongs to the DHHC palmitoyltransferase family. ERF2/ZDHHC9 subfamily. As to quaternary structure, interacts with GOLGA7.

It localises to the endoplasmic reticulum membrane. The protein resides in the golgi apparatus membrane. It catalyses the reaction L-cysteinyl-[protein] + hexadecanoyl-CoA = S-hexadecanoyl-L-cysteinyl-[protein] + CoA. Its function is as follows. Palmitoyltransferase that catalyzes the addition of palmitate onto various protein substrates, such as ADRB2, GSDMD, HRAS, NRAS and CGAS. The ZDHHC9-GOLGA7 complex is a palmitoyltransferase specific for HRAS and NRAS. May have a palmitoyltransferase activity toward the beta-2 adrenergic receptor/ADRB2 and therefore regulate G protein-coupled receptor signaling. Acts as a regulator of innate immunity by catalyzing palmitoylation of CGAS, thereby promoting CGAS homodimerization and cyclic GMP-AMP synthase activity. Activates pyroptosis by catalyzing palmitoylation of gasdermin-D (GSDMD), thereby promoting membrane translocation and pore formation of GSDMD. This is Palmitoyltransferase ZDHHC9 (ZDHHC9) from Pongo abelii (Sumatran orangutan).